Here is a 138-residue protein sequence, read N- to C-terminus: MAKAIPRSGSRRSGRIGSRKSTRRIPKGVIHVQASFNNTIVTVTDVRGRVVSWSSAGTCGFKGTRRGTPFAAQTAAGNAIRTVVDQGMQRAEVMIKGPGLGRDAALRAIRRSGILLTFVRDVTPMPHNGCRPPKKRRV.

A disordered region spans residues 1–24; that stretch reads MAKAIPRSGSRRSGRIGSRKSTRR. Over residues 9–24 the composition is skewed to basic residues; it reads GSRRSGRIGSRKSTRR.

Belongs to the universal ribosomal protein uS11 family. In terms of assembly, part of the 30S ribosomal subunit.

Its subcellular location is the plastid. The protein localises to the chloroplast. This Panax ginseng (Korean ginseng) protein is Small ribosomal subunit protein uS11c.